A 382-amino-acid polypeptide reads, in one-letter code: Sulfate adenylyltransferase (382 aa).

Belongs to the sulfate adenylyltransferase family.

The catalysed reaction is sulfate + ATP + H(+) = adenosine 5'-phosphosulfate + diphosphate. The protein operates within sulfur metabolism; hydrogen sulfide biosynthesis; sulfite from sulfate: step 1/3. The sequence is that of Sulfate adenylyltransferase from Ignicoccus hospitalis (strain KIN4/I / DSM 18386 / JCM 14125).